The primary structure comprises 719 residues: Polyribonucleotide nucleotidyltransferase (719 aa).

Mg(2+) contacts are provided by Asp-487 and Asp-493. Residues 554–613 (PRIETFKIATDKIREVIGTGGKVIREIVEKTGAKVNIEDDGTVKVASSDGEAMKAAIKWI) form the KH domain. The 69-residue stretch at 623 to 691 (GQIYDGTVVK…DRGKTRLSMK (69 aa)) folds into the S1 motif domain. The tract at residues 691–719 (KVVDQTTGEDLEAKQKDAPAEAPREAAGE) is disordered. Residues 701–719 (LEAKQKDAPAEAPREAAGE) show a composition bias toward basic and acidic residues.

This sequence belongs to the polyribonucleotide nucleotidyltransferase family. Mg(2+) serves as cofactor.

The protein resides in the cytoplasm. The enzyme catalyses RNA(n+1) + phosphate = RNA(n) + a ribonucleoside 5'-diphosphate. Its function is as follows. Involved in mRNA degradation. Catalyzes the phosphorolysis of single-stranded polyribonucleotides processively in the 3'- to 5'-direction. This is Polyribonucleotide nucleotidyltransferase from Bradyrhizobium sp. (strain ORS 278).